A 1079-amino-acid polypeptide reads, in one-letter code: Spermatogenesis-associated protein 31G1 (1079 aa).

Disordered stretches follow at residues Glu97–Gly145, Glu261–Val281, Gly297–Leu317, Lys331–Leu362, Glu376–Pro412, Asn506–Pro566, Val637–Lys678, and Pro840–Ala975. A compositionally biased stretch (acidic residues) spans Val98 to Ser113. Residues Phe336–Gln345 show a composition bias toward pro residues. Residues Leu398 to Pro412 show a composition bias toward basic and acidic residues. Low complexity-rich tracts occupy residues Asn551 to Leu562 and Ser645 to Ser655. Over residues Pro669–Lys678 the composition is skewed to basic and acidic residues. Positions Ala942–Pro951 are enriched in basic residues.

Functionally, dispensable for normal development and fertility. This Homo sapiens (Human) protein is Spermatogenesis-associated protein 31G1.